The chain runs to 539 residues: MSNGNSYNHHHQFPMSIPISCSSHSIQSQSRMNTLNANRDLLSPGNDVIVTRTVSPSFYSHGMPARDNVFRKDDHVRILGNTTDPAWYRARNANQEEGLVHADCVVRINGQAYDNGIVRMRASGCDVAPGAASTTSSTSSHHSTAANHQPWFHSMISRENTEKLLRGKPDGTFLVRESTNFPGDFTLCMSFHGKVEHYRIEQTSGGQLTCDKEEYFSNLTQLVSHYKRDADGLCHRLVTPIICETATFSSNGSSSFGSSSTVDLEDRTSVFRHAGLVISSNDIDVGDTIGHGEFGDVRLGTYKNRKVALKVSKRHGNGMLDSLLDEAKFMVGLSHPNLVTLVGVVLDDVNVYMITEYMANGNLIDLLRSRGRHALERRQLMMFAMDICQGMCYLESKQIVHRDLAARNVLLDDDLVAKVSDFGLAKKANSQSHDSASGKFPIKWTAPEALRHSQFTTKSDVWSFGILLWEIFSFGRVPYPRIPIQDVVRYIEKGYRMEAPEGCPPEIFKVMNETWALSAQDRPSFGQVLQRLTTIRNTV.

In terms of domain architecture, SH3 spans 43–110; the sequence is SPGNDVIVTR…HADCVVRING (68 aa). The tract at residues 129–148 is disordered; that stretch reads PGAASTTSSTSSHHSTAANH. Positions 131-146 are enriched in low complexity; the sequence is AASTTSSTSSHHSTAA. The region spanning 151 to 241 is the SH2 domain; that stretch reads WFHSMISREN…GLCHRLVTPI (91 aa). The 253-residue stretch at 283–535 folds into the Protein kinase domain; the sequence is IDVGDTIGHG…GQVLQRLTTI (253 aa). ATP contacts are provided by residues 289–297 and Lys-310; that span reads IGHGEFGDV. The active-site Proton acceptor is the Asp-403.

It belongs to the protein kinase superfamily. Tyr protein kinase family. CSK subfamily. Mg(2+) is required as a cofactor. Requires Mn(2+) as cofactor. As to expression, expressed predominantly in pharyngeal muscles in procorpus, metacorpus and terminal bulb. Expressed also in some neurons (ASE, ADF, AVA, AUA, RMDV and BAG) in the head region, anchor cell, vulva, cells around anus, body wall muscle and gondal distal tip cells.

The catalysed reaction is L-tyrosyl-[protein] + ATP = O-phospho-L-tyrosyl-[protein] + ADP + H(+). Non-receptor tyrosine-protein kinase which plays a role in pharynx function by regulating pumping and the orientation of pharyngeal muscle fibers, independently of src-1 and src-2. May phosphorylate and thereby negatively regulate src-1 and src-2 activities. The polypeptide is Tyrosine-protein kinase csk-1 (Caenorhabditis elegans).